A 476-amino-acid chain; its full sequence is Angiotensinogen (476 aa).

Positions 1-24 (MAPAGVSLRATILCLVAWAGLAAG) are cleaved as a signal peptide. N38, N161, N295, and N319 each carry an N-linked (GlcNAc...) asparagine glycan. The cysteines at positions 42 and 162 are disulfide-linked.

The protein belongs to the serpin family. In terms of processing, in response to low blood pressure, the enzyme renin/REN cleaves angiotensinogen to produce angiotensin-1. Angiotensin-1 is a substrate of ACE (angiotensin converting enzyme) that removes a dipeptide to yield the physiologically active peptide angiotensin-2. Angiotensin-1 and angiotensin-2 can be further processed to generate angiotensin-3, angiotensin-4. Angiotensin 1-9 is cleaved from angiotensin-1 by ACE2 and can be further processed by ACE to produce angiotensin 1-7, angiotensin 1-5 and angiotensin 1-4. Angiotensin 1-7 has also been proposed to be cleaved from angiotensin-2 by ACE2 or from angiotensin-1 by MME (neprilysin). Post-translationally, the disulfide bond is labile. Angiotensinogen is present in the circulation in a near 40:60 ratio with the oxidized disulfide-bonded form, which preferentially interacts with receptor-bound renin.

Its subcellular location is the secreted. Its function is as follows. Essential component of the renin-angiotensin system (RAS), a potent regulator of blood pressure, body fluid and electrolyte homeostasis. In terms of biological role, acts directly on vascular smooth muscle as a potent vasoconstrictor, affects cardiac contractility and heart rate through its action on the sympathetic nervous system, and alters renal sodium and water absorption through its ability to stimulate the zona glomerulosa cells of the adrenal cortex to synthesize and secrete aldosterone. Acts by binding to angiotensin receptors AGTR1 and AGTR2. Also binds the DEAR/FBXW7-AS1 receptor. Functionally, stimulates aldosterone release. Is a ligand for the G-protein coupled receptor MAS1. Has vasodilator and antidiuretic effects. Has an antithrombotic effect that involves MAS1-mediated release of nitric oxide from platelets. The protein is Angiotensinogen (AGT) of Pan troglodytes (Chimpanzee).